The following is a 297-amino-acid chain: Nicotinate-nucleotide pyrophosphorylase [carboxylating] (297 aa).

Pro2 carries the blocked amino end (Pro) modification. Residues Arg119, Thr152–Lys154, Arg176, Lys186, Glu215, Asp236, Ser259–Asn261, and Val280–Ala282 contribute to the substrate site.

It belongs to the NadC/ModD family. As to quaternary structure, hexamer formed by 3 homodimers. Homodimer.

The enzyme catalyses nicotinate beta-D-ribonucleotide + CO2 + diphosphate = quinolinate + 5-phospho-alpha-D-ribose 1-diphosphate + 2 H(+). It functions in the pathway cofactor biosynthesis; NAD(+) biosynthesis; nicotinate D-ribonucleotide from quinolinate: step 1/1. Its function is as follows. Involved in the catabolism of quinolinic acid (QA). In Salmonella typhimurium (strain LT2 / SGSC1412 / ATCC 700720), this protein is Nicotinate-nucleotide pyrophosphorylase [carboxylating] (nadC).